A 222-amino-acid polypeptide reads, in one-letter code: Protein Thf1 (222 aa).

The stretch at 169–208 (IEKVKRDLELYRSNLDKINQARSLMKELVEQERKRRAQQT) forms a coiled coil. The interval 197–222 (VEQERKRRAQQTSAPPAVDASSDAPA) is disordered. The segment covering 209 to 222 (SAPPAVDASSDAPA) has biased composition (low complexity).

It belongs to the THF1 family.

May be involved in photosynthetic membrane biogenesis. This chain is Protein Thf1, found in Thermosynechococcus vestitus (strain NIES-2133 / IAM M-273 / BP-1).